The primary structure comprises 269 residues: Putative imidazole glycerol phosphate synthase subunit hisF2 (269 aa).

Asp-133 is a catalytic residue.

It belongs to the HisA/HisF family. As to quaternary structure, heterodimer of HisH and HisF.

Its subcellular location is the cytoplasm. It carries out the reaction 5-[(5-phospho-1-deoxy-D-ribulos-1-ylimino)methylamino]-1-(5-phospho-beta-D-ribosyl)imidazole-4-carboxamide + L-glutamine = D-erythro-1-(imidazol-4-yl)glycerol 3-phosphate + 5-amino-1-(5-phospho-beta-D-ribosyl)imidazole-4-carboxamide + L-glutamate + H(+). Its pathway is amino-acid biosynthesis; L-histidine biosynthesis; L-histidine from 5-phospho-alpha-D-ribose 1-diphosphate: step 5/9. IGPS catalyzes the conversion of PRFAR and glutamine to IGP, AICAR and glutamate. The HisF subunit catalyzes the cyclization activity that produces IGP and AICAR from PRFAR using the ammonia provided by the HisH subunit. The polypeptide is Putative imidazole glycerol phosphate synthase subunit hisF2 (hisF2) (Parasynechococcus marenigrum (strain WH8102)).